We begin with the raw amino-acid sequence, 453 residues long: Citrate (Re)-synthase (453 aa).

The 271-residue stretch at 46-316 folds into the Pyruvate carboxyltransferase domain; it reads IYITDTTFRD…TKNMKLHVIT (271 aa).

This sequence belongs to the alpha-IPM synthase/homocitrate synthase family. Mn(2+) is required as a cofactor. It depends on Co(2+) as a cofactor. Mg(2+) serves as cofactor.

It carries out the reaction oxaloacetate + acetyl-CoA + H2O = citrate + CoA + H(+). Its activity is regulated as follows. Inhibited by p-chloromercuribenzoate (pCMB), EDTA, Zn(2+) ions, and under aerobic conditions. In terms of biological role, catalyzes the condensation of the acetyl group of acetyl-CoA with oxaloacetate to form citrate. This enzyme is highly Re-face stereospecific with respect to the C-2 of oxaloacetate. This is Citrate (Re)-synthase from Clostridium kluyveri (strain ATCC 8527 / DSM 555 / NBRC 12016 / NCIMB 10680 / K1).